A 551-amino-acid chain; its full sequence is Transcription factor 7-like 1-B (551 aa).

The span at 1–11 shows a compositional bias: gly residues; it reads MPQLNSGGGDE. Positions 1–61 are interaction with CTNNB1-A; the sequence is MPQLNSGGGD…SENHSSDSDS (61 aa). 4 disordered regions span residues 1–77, 183–213, 391–474, and 492–515; these read MPQL…EKPR, GTPPGHLSPEIDPKTGIPRPPHPSELSPYYP, WSAR…SLTT, and SPSSSSLSGHLPSPVGSPLLSRPI. 2 stretches are compositionally biased toward basic and acidic residues: residues 17 to 32 and 52 to 77; these read ELIRFKDEGEQEEKSP and SENHSSDSDSEVERRPPPRETFEKPR. The segment at 109-312 is interaction with AES and TLE4-A; that stretch reads LGGHYLPNGA…SPNLSTKSNV (204 aa). The segment at residues 324 to 392 is a DNA-binding region (HMG box); sequence IKKPLNAFML…LHSQLYPSWS (69 aa). Residues 407–416 are compositionally biased toward basic and acidic residues; it reads KQSPEMENYT. The interaction with CTBP-B stretch occupies residues 408-551; that stretch reads QSPEMENYTK…PLSLVTRSSD (144 aa). A compositionally biased stretch (low complexity) spans 445 to 464; the sequence is SPATPSAALASPAAPAATHS. The span at 465–474 shows a compositional bias: polar residues; the sequence is EQAQPLSLTT.

The protein belongs to the TCF/LEF family. In terms of assembly, interacts with csnk1e, ctnnb1-A, ctbp-B, dact1-A and gsk3b. May interact with ase and tle4-A. Interacts with tle1-B. Phosphorylated. Phosphorylation by csnk1e promotes binding to ctnnb1-A while phosphorylation by gsk3b may reverse this effect.

The protein resides in the nucleus. Its function is as follows. Participates in the Wnt signaling pathway. Binds to DNA and acts as a repressor in the absence of ctnnb1-A and possibly ctnnb1-B, and as an activator in the presence of these proteins. Required early in development for the establishment of the dorsal body axis in response to maternal Wnt signaling. The chain is Transcription factor 7-like 1-B (tcf7l1-b) from Xenopus laevis (African clawed frog).